Consider the following 276-residue polypeptide: Shikimate dehydrogenase (NADP(+)) (276 aa).

Residues 15–17 (SMS) and Thr-63 each bind shikimate. The Proton acceptor role is filled by Lys-67. Residue Asp-79 participates in NADP(+) binding. Shikimate contacts are provided by Asn-88 and Asp-103. NADP(+)-binding positions include 130–134 (GAGGA), 154–159 (NRTLSR), and Ile-217. A shikimate-binding site is contributed by Tyr-219. Gly-240 contacts NADP(+).

Belongs to the shikimate dehydrogenase family. Homodimer.

The catalysed reaction is shikimate + NADP(+) = 3-dehydroshikimate + NADPH + H(+). It participates in metabolic intermediate biosynthesis; chorismate biosynthesis; chorismate from D-erythrose 4-phosphate and phosphoenolpyruvate: step 4/7. Involved in the biosynthesis of the chorismate, which leads to the biosynthesis of aromatic amino acids. Catalyzes the reversible NADPH linked reduction of 3-dehydroshikimate (DHSA) to yield shikimate (SA). This Oceanobacillus iheyensis (strain DSM 14371 / CIP 107618 / JCM 11309 / KCTC 3954 / HTE831) protein is Shikimate dehydrogenase (NADP(+)).